A 513-amino-acid polypeptide reads, in one-letter code: Xylose import ATP-binding protein XylG (513 aa).

ABC transporter domains lie at 5 to 242 (LEMK…VGRE) and 259 to 505 (LRIE…LRSE). 37-44 (GENGSGKS) serves as a coordination point for ATP.

It belongs to the ABC transporter superfamily. Xylose importer (TC 3.A.1.2.4) family. As to quaternary structure, the complex is composed of two ATP-binding proteins (XylG), two transmembrane proteins (XylH) and a solute-binding protein (XylF).

The protein localises to the cell inner membrane. The enzyme catalyses D-xylose(out) + ATP + H2O = D-xylose(in) + ADP + phosphate + H(+). Its function is as follows. Part of the ABC transporter complex XylFGH involved in xylose import. Responsible for energy coupling to the transport system. The XylFGH system can also transport ribose in absence of xylose. In Escherichia coli (strain K12), this protein is Xylose import ATP-binding protein XylG.